A 739-amino-acid polypeptide reads, in one-letter code: Endoglucanase F (739 aa).

Residues 1–27 (MKKILAFLLTVALVAVVAIPQAVVSFA) form the signal peptide. The catalytic stretch occupies residues 28–470 (ADFNYGEALQ…AKMYEKYGGE (443 aa)). The Nucleophile role is filled by Asp-84. Catalysis depends on residues His-400, Asp-438, and Glu-447. The CBM3 domain maps to 480–639 (TPGEEFYVEA…NVRVWGKVPD (160 aa)). Positions 664-737 (PGIMLGDVNF…ILKLIEKFPA (74 aa)) constitute a Dockerin domain.

Belongs to the glycosyl hydrolase 9 (cellulase E) family. The cofactor is Ca(2+).

The catalysed reaction is Endohydrolysis of (1-&gt;4)-beta-D-glucosidic linkages in cellulose, lichenin and cereal beta-D-glucans.. This enzyme catalyzes the endohydrolysis of 1,4-beta-glucosidic linkages in cellulose, lichenin and cereal beta-D-glucans. This chain is Endoglucanase F (celF), found in Acetivibrio thermocellus (strain ATCC 27405 / DSM 1237 / JCM 9322 / NBRC 103400 / NCIMB 10682 / NRRL B-4536 / VPI 7372) (Clostridium thermocellum).